A 330-amino-acid polypeptide reads, in one-letter code: Major ferric iron-binding protein (330 aa).

Residues 1–22 (MKTSIRYALLAAALTAATPALA) form the signal peptide. 4 residues coordinate Fe cation: His31, Glu79, Tyr217, and Tyr218.

This sequence belongs to the bacterial solute-binding protein 1 family.

It is found in the periplasm. Functionally, this protein may be a central component in the iron-acquisition system. The protein is Major ferric iron-binding protein (fbp) of Neisseria gonorrhoeae.